The following is a 626-amino-acid chain: Janus kinase and microtubule-interacting protein 1 (626 aa).

Residues M1–V365 are mediates association with microtubules. 2 coiled-coil regions span residues V19 to E254 and E284 to S413. Residues V365–M626 are mediates interaction with TYK2 and GABBR1. A Phosphoserine modification is found at S382. Over residues E452–T461 the composition is skewed to polar residues. A disordered region spans residues E452–T480. Phosphothreonine is present on T470. Positions Q490–R604 form a coiled coil.

It belongs to the JAKMIP family. As to quaternary structure, homodimer. Forms a complex with GABBR1 and KIF5B/kinesin-1. Interacts with JAK1 and TYK2. In terms of processing, phosphorylated.

It localises to the cytoplasm. Its subcellular location is the cytoskeleton. The protein resides in the membrane. Functionally, associates with microtubules and may play a role in the microtubule-dependent transport of the GABA-B receptor. May play a role in JAK1 signaling and regulate microtubule cytoskeleton rearrangements. The protein is Janus kinase and microtubule-interacting protein 1 (JAKMIP1) of Bos taurus (Bovine).